The chain runs to 473 residues: Photosystem II CP43 reaction center protein (473 aa).

Positions Met1–Glu14 are excised as a propeptide. Thr15 bears the N-acetylthreonine mark. Phosphothreonine is present on Thr15. The next 5 helical transmembrane spans lie at Leu69–Ala93, Leu134–Asn155, Lys178–Thr200, Lys255–Ser275, and Trp291–Ala312. Glu367 contributes to the [CaMn4O5] cluster binding site. A helical membrane pass occupies residues Arg447–Pro471.

The protein belongs to the PsbB/PsbC family. PsbC subfamily. As to quaternary structure, PSII is composed of 1 copy each of membrane proteins PsbA, PsbB, PsbC, PsbD, PsbE, PsbF, PsbH, PsbI, PsbJ, PsbK, PsbL, PsbM, PsbT, PsbX, PsbY, PsbZ, Psb30/Ycf12, at least 3 peripheral proteins of the oxygen-evolving complex and a large number of cofactors. It forms dimeric complexes. Binds multiple chlorophylls and provides some of the ligands for the Ca-4Mn-5O cluster of the oxygen-evolving complex. It may also provide a ligand for a Cl- that is required for oxygen evolution. PSII binds additional chlorophylls, carotenoids and specific lipids. is required as a cofactor.

It localises to the plastid. Its subcellular location is the chloroplast thylakoid membrane. Functionally, one of the components of the core complex of photosystem II (PSII). It binds chlorophyll and helps catalyze the primary light-induced photochemical processes of PSII. PSII is a light-driven water:plastoquinone oxidoreductase, using light energy to abstract electrons from H(2)O, generating O(2) and a proton gradient subsequently used for ATP formation. This Welwitschia mirabilis (Tree tumbo) protein is Photosystem II CP43 reaction center protein.